A 506-amino-acid chain; its full sequence is Sodium transporter HKT1 (506 aa).

The Cytoplasmic portion of the chain corresponds to 1–19 (MDRVVAKIAKIRSQLTKLR). The chain crosses the membrane as a helical span at residues 20–40 (SLFFLYFIYFLFFSFLGFLAL). Topologically, residues 41-81 (KITKPRTTSRPHDFDLFFTSVSAITVSSMSTVDMEVFSNTQ) are extracellular. The helical transmembrane segment at 82 to 102 (LIFLTILMFLGGEIFTSFLNL) threads the bilayer. Residues 103-159 (YVSYFTKFVFPHNKIRHILGSYNSDSSIEDRCDVETVTDYREGLIKIDERASKCLYS) lie on the Cytoplasmic side of the membrane. Residues 160-180 (VVLSYHLVTNLVGSVLLLVYV) traverse the membrane as a helical segment. The Extracellular segment spans residues 181–232 (NFVKTARDVLSSKEISPLTFSVFTTVSTFANCGFVPTNENMIIFRKNSGLIW). A helical membrane pass occupies residues 233-253 (LLIPQVLMGNTLFPCFLVLLI). Topologically, residues 254-286 (WGLYKITKRDEYGYILKNHNKMGYSHLLSVRLC) are cytoplasmic. The chain crosses the membrane as a helical span at residues 287 to 307 (VLLGVTVLGFLIIQLLFFCAF). Residues 308–348 (EWTSESLEGMSSYEKLVGSLFQVVNSRHTGETIVDLSTLSP) lie on the Extracellular side of the membrane. Residues 349–369 (AILVLFILMMYLPPYTLFMPL) traverse the membrane as a helical segment. The Cytoplasmic portion of the chain corresponds to 370-392 (TEQKTIEKEGGDDDSENGKKVKK). Residues 393-413 (SGLIVSQLSFLTICIFLISIT) form a helical membrane-spanning segment. At 414 to 465 (ERQNLQRDPINFNVLNITLEVISAYGNVGFTTGYSCERRVDISDGGCKDASY) the chain is on the extracellular side. A glycan (N-linked (GlcNAc...) asparagine) is linked at Asn-429. Residues 466-486 (GFAGRWSPMGKFVLIIVMFYG) traverse the membrane as a helical segment. The Cytoplasmic portion of the chain corresponds to 487 to 506 (RFKQFTAKSGRAWILYPSSS).

This sequence belongs to the TrkH potassium transport family. HKT (TC 2.A.38.3) subfamily. In terms of processing, N-glycosylated. Not essential for functional expression and membrane targeting. Highly expressed in roots. Expressed in flowers, leaves and stems. Expressed in the vascular tissues of every organs. In roots, leaves and flower peduncles, it is only expressed in the phloem tissues. Not expressed in root peripheral cells.

It localises to the cell membrane. It catalyses the reaction Na(+)(in) = Na(+)(out). In terms of biological role, sodium transporter protein, which plays a central role in plant tolerance to salt. Upon prolongated exposure to high concentrations, Na(+) translocates from the roots to the transpiring leaves where it can increase to toxic level. Involved in Na(+) recirculation from shoots to roots, probably by mediating Na(+) loading into the phloem sap in shoots and unloading in roots, thereby removing large amounts of Na(+) from the shoot. Does not transport K(+) but regulates K(+) nutrient status via its ability to facilitate Na(+) homeostasis. Probably not involved in root uptake of Na(+). This is Sodium transporter HKT1 (HKT1) from Arabidopsis thaliana (Mouse-ear cress).